We begin with the raw amino-acid sequence, 299 residues long: 4-diphosphocytidyl-2-C-methyl-D-erythritol kinase (299 aa).

The active site involves K11. 94-104 (PQGGGLGGGSS) serves as a coordination point for ATP. D136 is a catalytic residue.

The protein belongs to the GHMP kinase family. IspE subfamily.

It catalyses the reaction 4-CDP-2-C-methyl-D-erythritol + ATP = 4-CDP-2-C-methyl-D-erythritol 2-phosphate + ADP + H(+). It participates in isoprenoid biosynthesis; isopentenyl diphosphate biosynthesis via DXP pathway; isopentenyl diphosphate from 1-deoxy-D-xylulose 5-phosphate: step 3/6. Functionally, catalyzes the phosphorylation of the position 2 hydroxy group of 4-diphosphocytidyl-2C-methyl-D-erythritol. This is 4-diphosphocytidyl-2-C-methyl-D-erythritol kinase from Bordetella bronchiseptica (strain ATCC BAA-588 / NCTC 13252 / RB50) (Alcaligenes bronchisepticus).